The following is a 109-amino-acid chain: Small ribosomal subunit protein eS25 (109 aa).

Residues 1 to 36 are disordered; sequence MGGASKKPISTVEKRMKKMAEEQQKKQQKRATTKTG. Residues 12–25 show a composition bias toward basic and acidic residues; it reads VEKRMKKMAEEQQK.

The protein belongs to the eukaryotic ribosomal protein eS25 family.

The sequence is that of Small ribosomal subunit protein eS25 (rps25e) from Sulfurisphaera tokodaii (strain DSM 16993 / JCM 10545 / NBRC 100140 / 7) (Sulfolobus tokodaii).